The chain runs to 386 residues: Probable protein phosphatase 2C 36 (386 aa).

One can recognise a PPM-type phosphatase domain in the interval 60-363 (ELSVAVVQGN…DDITVIVLFI (304 aa)). Mn(2+)-binding residues include Asp-94, Gly-95, Asp-295, and Asp-354.

It belongs to the PP2C family. Mg(2+) is required as a cofactor. It depends on Mn(2+) as a cofactor.

It carries out the reaction O-phospho-L-seryl-[protein] + H2O = L-seryl-[protein] + phosphate. The enzyme catalyses O-phospho-L-threonyl-[protein] + H2O = L-threonyl-[protein] + phosphate. In Oryza sativa subsp. japonica (Rice), this protein is Probable protein phosphatase 2C 36.